Here is a 221-residue protein sequence, read N- to C-terminus: DELTA-actitoxin-Ucs1a (221 aa).

A signal peptide spans 1 to 19 (MNRLIVLCLFVAMIYATIA). Residues 20 to 42 (LPKKEDISNDERSISVSKVPVKK) constitute a propeptide that is removed on maturation. The interval 45–54 (AIAGAVIEGA) is plays an important role in the hemolytic activity. The interval 53-72 (GAKLTFGILEKILTVLGDIN) is N-terminal region. Phosphocholine is bound by residues S96, V129, S147, P149, Y175, Y179, and Y180. The interval 147–162 (SVPYDYNLYSNWWNIK) is trp-rich region, which is important for the binding to lipid membrane. The short motif at 186-188 (KGD) is the Cell attachment site, crucial for protein stability element.

The protein belongs to the actinoporin family. Sea anemone subfamily. As to quaternary structure, octamer or nonamer in membranes. Monomer in the soluble state.

The protein resides in the secreted. It is found in the nematocyst. It localises to the target cell membrane. Pore-forming protein that forms cations-selective hydrophilic pores of around 1 nm and causes cytolysis. Pore formation is a multi-step process that involves specific recognition of membrane sphingomyelin (but neither cholesterol nor phosphatidylcholine) using aromatic rich region and adjacent phosphocholine (POC) binding site, firm binding to the membrane (mainly driven by hydrophobic interactions) accompanied by the transfer of the N-terminal region to the lipid-water interface and finally pore formation after oligomerization of monomers. The polypeptide is DELTA-actitoxin-Ucs1a (Urticina crassicornis (Mottled anemone)).